A 675-amino-acid chain; its full sequence is Neurexin-3b-beta (675 aa).

Residues 1–30 (MRPHFKTRYPQWLSCMLPLVTGCVFGAVWG) form the signal peptide. The Extracellular segment spans residues 31–599 (SNLDSTVVLS…EVIRESSSTT (569 aa)). The region spanning 81 to 281 (ATYIFGKGGG…HANIKINGSV (201 aa)) is the Laminin G-like domain. Disordered regions lie at residues 313-337 (TTLSTTTTRKQRSPPTIQTTDDIVS) and 490-534 (FKPK…MNNR). Polar residues predominate over residues 325 to 335 (SPPTIQTTDDI). Residues 600–620 (GMVVGIVSAAALCILILLYAM) traverse the membrane as a helical segment. The Cytoplasmic segment spans residues 621–675 (YKYRNRDEGSYQVDETRNYISNSAQNNGTVVKDKQPSTKGASNKRPKDKDKEYYV). Positions 642–675 (NSAQNNGTVVKDKQPSTKGASNKRPKDKDKEYYV) are disordered. Residues 665–675 (RPKDKDKEYYV) show a composition bias toward basic and acidic residues.

This sequence belongs to the neurexin family. Post-translationally, processed by alpha-secretase leading to the formation of an extracellular soluble protein as well as a C-terminal membrane-embedded fragment (CTF). Proteolysis of these CTFs by gamma-secretase releases intracellular domains (ICDs) and extracellular peptides.

The protein localises to the membrane. Neuronal cell surface protein that may be involved in cell recognition and cell adhesion. This is Neurexin-3b-beta (nrxn3b) from Danio rerio (Zebrafish).